A 392-amino-acid chain; its full sequence is DNA replication and repair protein RecF (392 aa).

Residue 33–40 (GANGAGKT) coordinates ATP.

This sequence belongs to the RecF family.

The protein localises to the cytoplasm. Functionally, the RecF protein is involved in DNA metabolism; it is required for DNA replication and normal SOS inducibility. RecF binds preferentially to single-stranded, linear DNA. It also seems to bind ATP. This Caulobacter sp. (strain K31) protein is DNA replication and repair protein RecF.